Here is a 267-residue protein sequence, read N- to C-terminus: Imidazole glycerol phosphate synthase subunit HisF (267 aa).

Residues D22 and D141 contribute to the active site.

It belongs to the HisA/HisF family. Heterodimer of HisH and HisF.

It localises to the cytoplasm. The catalysed reaction is 5-[(5-phospho-1-deoxy-D-ribulos-1-ylimino)methylamino]-1-(5-phospho-beta-D-ribosyl)imidazole-4-carboxamide + L-glutamine = D-erythro-1-(imidazol-4-yl)glycerol 3-phosphate + 5-amino-1-(5-phospho-beta-D-ribosyl)imidazole-4-carboxamide + L-glutamate + H(+). It functions in the pathway amino-acid biosynthesis; L-histidine biosynthesis; L-histidine from 5-phospho-alpha-D-ribose 1-diphosphate: step 5/9. Functionally, IGPS catalyzes the conversion of PRFAR and glutamine to IGP, AICAR and glutamate. The HisF subunit catalyzes the cyclization activity that produces IGP and AICAR from PRFAR using the ammonia provided by the HisH subunit. This chain is Imidazole glycerol phosphate synthase subunit HisF, found in Mycobacterium tuberculosis (strain ATCC 25177 / H37Ra).